The following is a 342-amino-acid chain: Spore photoproduct lyase (342 aa).

The Radical SAM core domain occupies 77–305 (SKPSAEYAIP…EEKRRYKWGR (229 aa)). 3 residues coordinate [4Fe-4S] cluster: C91, C95, and C98. The H-T-H motif DNA-binding region spans 218–235 (EAAVKVAKAGYPLGFIVA).

It belongs to the radical SAM superfamily. SPL family. In terms of assembly, monomer or homodimer. The cofactor is [4Fe-4S] cluster. Requires S-adenosyl-L-methionine as cofactor.

The enzyme catalyses (5R)-5,6-dihydro-5-(thymidin-7-yl)thymidine in DNA = a thymidine dimer in DNA. Functionally, involved in repair of UV radiation-induced DNA damage during spore germination. Can repair thymine dimer 5-thyminyl-5,6-dihydrothymine (known as spore photoproduct (SP)) by in situ monomerization of SP to two thymines. This is Spore photoproduct lyase (splB) from Bacillus subtilis (strain 168).